We begin with the raw amino-acid sequence, 337 residues long: ATP-dependent (S)-NAD(P)H-hydrate dehydratase (337 aa).

Position 6 is a phosphoserine (S6). In terms of domain architecture, YjeF C-terminal spans 11 to 335 (IKLAQKRCIP…DRVGEVFAKL (325 aa)). (6S)-NADPHX-binding positions include G121 and 182–188 (NVVEFKR). Residues 218-222 (KGQSD) and 240-249 (GSNKRVGGQG) each bind ATP. Positions 224–246 (IFSPDSEKDMLTNSEEGSNKRVG) are disordered. Position 250 (D250) interacts with (6S)-NADPHX.

This sequence belongs to the NnrD/CARKD family. It depends on Mg(2+) as a cofactor.

It is found in the cytoplasm. It catalyses the reaction (6S)-NADHX + ATP = ADP + phosphate + NADH + H(+). The enzyme catalyses (6S)-NADPHX + ATP = ADP + phosphate + NADPH + H(+). In terms of biological role, catalyzes the dehydration of the S-form of NAD(P)HX at the expense of ATP, which is converted to ADP. Together with NAD(P)HX epimerase, which catalyzes the epimerization of the S- and R-forms, the enzyme allows the repair of both epimers of NAD(P)HX, a damaged form of NAD(P)H that is a result of enzymatic or heat-dependent hydration. This Saccharomyces cerevisiae (strain ATCC 204508 / S288c) (Baker's yeast) protein is ATP-dependent (S)-NAD(P)H-hydrate dehydratase.